Reading from the N-terminus, the 818-residue chain is Serine/threonine-protein phosphatase 4 regulatory subunit 3 (818 aa).

Residues 1-100 form the WH1 domain; the sequence is MTDTRRRVKV…DEIWEKICQV (100 aa). Residues 670 to 681 show a composition bias toward acidic residues; the sequence is FNTDEEDLEDGE. Residues 670-818 are disordered; it reads FNTDEEDLED…PLSKKSKLSS (149 aa). Residues 703–718 are compositionally biased toward basic and acidic residues; it reads FMERKKLKDSEEKEVL. The segment covering 729–775 has biased composition (low complexity); the sequence is SPSFKLSFSSSPKASLSSPPTASLHPGSPGSPSSPGTGARSSPPSAA. Residues Ser-769 and Ser-770 each carry the phosphoserine modification. The span at 788–803 shows a compositional bias: acidic residues; the sequence is YPDDDEEDEDEEDADS.

Belongs to the SMEK family. Serine/threonine-protein phosphatase 4 (PP4) occurs in different assemblies of the catalytic and one or more regulatory subunits.

In terms of biological role, regulatory subunit of serine/threonine-protein phosphatase 4. The sequence is that of Serine/threonine-protein phosphatase 4 regulatory subunit 3 (smek1) from Danio rerio (Zebrafish).